Reading from the N-terminus, the 142-residue chain is Nucleoside diphosphate kinase (142 aa).

ATP is bound by residues Lys-11, Phe-59, Arg-87, Thr-93, Arg-104, and Asn-114. Catalysis depends on His-117, which acts as the Pros-phosphohistidine intermediate.

Belongs to the NDK family. As to quaternary structure, homotetramer. It depends on Mg(2+) as a cofactor.

The protein resides in the cytoplasm. The enzyme catalyses a 2'-deoxyribonucleoside 5'-diphosphate + ATP = a 2'-deoxyribonucleoside 5'-triphosphate + ADP. It catalyses the reaction a ribonucleoside 5'-diphosphate + ATP = a ribonucleoside 5'-triphosphate + ADP. Functionally, major role in the synthesis of nucleoside triphosphates other than ATP. The ATP gamma phosphate is transferred to the NDP beta phosphate via a ping-pong mechanism, using a phosphorylated active-site intermediate. The chain is Nucleoside diphosphate kinase from Hahella chejuensis (strain KCTC 2396).